Consider the following 31-residue polypeptide: Cuticle protein 54 (31 aa).

A run of 2 repeats spans residues 7–10 and 13–17.

Component of the cuticle of migratory locust which contains more than 100 different structural proteins. This Locusta migratoria (Migratory locust) protein is Cuticle protein 54.